Here is a 261-residue protein sequence, read N- to C-terminus: Probable septum site-determining protein MinC (261 aa).

A disordered region spans residues 106–145 (RAPAAKPADEAEPAAVPAVETAAAPAAAAAPEQPSEPAPT). A compositionally biased stretch (low complexity) spans 118–144 (PAAVPAVETAAAPAAAAAPEQPSEPAP).

It belongs to the MinC family. As to quaternary structure, interacts with MinD and FtsZ.

Its function is as follows. Cell division inhibitor that blocks the formation of polar Z ring septums. Rapidly oscillates between the poles of the cell to destabilize FtsZ filaments that have formed before they mature into polar Z rings. Prevents FtsZ polymerization. This is Probable septum site-determining protein MinC from Burkholderia orbicola (strain AU 1054).